A 296-amino-acid polypeptide reads, in one-letter code: tRNA dimethylallyltransferase (296 aa).

ATP is bound at residue 11–18 (GPTAVGKT). 13–18 (TAVGKT) provides a ligand contact to substrate. Positions 36–39 (DSQQ) are interaction with substrate tRNA.

The protein belongs to the IPP transferase family. In terms of assembly, monomer. Mg(2+) is required as a cofactor.

It carries out the reaction adenosine(37) in tRNA + dimethylallyl diphosphate = N(6)-dimethylallyladenosine(37) in tRNA + diphosphate. Its function is as follows. Catalyzes the transfer of a dimethylallyl group onto the adenine at position 37 in tRNAs that read codons beginning with uridine, leading to the formation of N6-(dimethylallyl)adenosine (i(6)A). The protein is tRNA dimethylallyltransferase of Streptococcus equi subsp. equi (strain 4047).